Here is a 197-residue protein sequence, read N- to C-terminus: Phosphoheptose isomerase (197 aa).

The SIS domain maps to 34–196; the sequence is MVQCLLGGNK…DRTLFPQDEQ (163 aa). 49–51 is a substrate binding site; sequence NGG. Positions 58 and 62 each coordinate Zn(2+). Substrate contacts are provided by residues E62, 91 to 92, 117 to 119, S122, and Q172; these read ND and STS. Residues Q172 and H180 each contribute to the Zn(2+) site.

The protein belongs to the SIS family. GmhA subfamily. As to quaternary structure, homotetramer. Zn(2+) is required as a cofactor.

Its subcellular location is the cytoplasm. It carries out the reaction 2 D-sedoheptulose 7-phosphate = D-glycero-alpha-D-manno-heptose 7-phosphate + D-glycero-beta-D-manno-heptose 7-phosphate. It functions in the pathway carbohydrate biosynthesis; D-glycero-D-manno-heptose 7-phosphate biosynthesis; D-glycero-alpha-D-manno-heptose 7-phosphate and D-glycero-beta-D-manno-heptose 7-phosphate from sedoheptulose 7-phosphate: step 1/1. Catalyzes the isomerization of sedoheptulose 7-phosphate in D-glycero-D-manno-heptose 7-phosphate. The sequence is that of Phosphoheptose isomerase from Shewanella frigidimarina (strain NCIMB 400).